The primary structure comprises 146 residues: Cystatin-C (146 aa).

The N-terminal stretch at 1–26 (MAGPLRAPLLLLAILAVALALSPAAG) is a signal peptide. A Phosphoserine modification is found at Ser43. Residues 81-85 (QIVAG) carry the Secondary area of contact motif. Disulfide bonds link Cys99–Cys109 and Cys123–Cys143.

It belongs to the cystatin family.

The protein resides in the secreted. As an inhibitor of cysteine proteinases, this protein is thought to serve an important physiological role as a local regulator of this enzyme activity. This Saimiri sciureus (Common squirrel monkey) protein is Cystatin-C (CST3).